Consider the following 571-residue polypeptide: E3 ubiquitin-protein ligase RNF168 (571 aa).

The RING-type zinc finger occupies 16 to 55; the sequence is CGICMEILVEPVTLPCNHTLCKPCFQSTVEKASLCCPFCR. The residue at position 70 (S70) is a Phosphoserine. The LR motif 1 signature appears at 110–128; that stretch reads LSKPGELRREYEEEISKVA. S134 is modified (phosphoserine). The UMI motif signature appears at 143–151; that stretch reads EEYIQRLLA. Disordered regions lie at residues 151–174 and 191–292; these read AEEEEEEKRQAEKRRRAMEEQLKS and EGSI…GADS. An MIU motif 1 motif is present at residues 168 to 191; the sequence is MEEQLKSDEELARKLSIDINNFCE. The residue at position 197 (S197) is a Phosphoserine. Positions 202 to 214 are enriched in basic and acidic residues; sequence RKSDPVTPKSEKK. K210 is covalently cross-linked (Glycyl lysine isopeptide (Lys-Gly) (interchain with G-Cter in SUMO2)). Polar residues predominate over residues 231–242; that stretch reads PKSQFGSASHSE. The segment covering 243–263 has biased composition (basic and acidic residues); the sequence is AVQEVRKDSVSKDIDSSDRKS. T362 is subject to Phosphothreonine. Disordered regions lie at residues 390-422 and 459-560; these read NQESSFEAVKDPCFSAKRRKVSPESSPDQEETE and KEQM…ISQK. Residues S411, S414, and S415 each carry the phosphoserine modification. The MIU motif 2 signature appears at 439–462; sequence RHKQEEQDRLLALQLQKEVDKEQM. Positions 466-477 match the LR motif 2 motif; sequence RQKGSPDEYHLR. Residue S470 is modified to Phosphoserine. Residues 508 to 519 show a composition bias toward basic and acidic residues; it reads PTPERGSRDKNR. 2 stretches are compositionally biased toward polar residues: residues 520-530 and 549-560; these read QVSLKMQLKQS and SAHSLQPSISQK. K528 is covalently cross-linked (Glycyl lysine isopeptide (Lys-Gly) (interchain with G-Cter in SUMO2)).

The protein belongs to the RNF168 family. Monomer. Interacts with UBE2N/UBC13. Post-translationally, sumoylated with SUMO1 by PIAS4 in response to double-strand breaks (DSBs). In terms of processing, ubiquitinated.

Its subcellular location is the nucleus. It catalyses the reaction S-ubiquitinyl-[E2 ubiquitin-conjugating enzyme]-L-cysteine + [acceptor protein]-L-lysine = [E2 ubiquitin-conjugating enzyme]-L-cysteine + N(6)-ubiquitinyl-[acceptor protein]-L-lysine.. It functions in the pathway protein modification; protein ubiquitination. E3 ubiquitin-protein ligase required for accumulation of repair proteins to sites of DNA damage. Acts with UBE2N/UBC13 to amplify the RNF8-dependent histone ubiquitination. Recruited to sites of DNA damage at double-strand breaks (DSBs) by binding to ubiquitinated histone H2A and H2AX and amplifies the RNF8-dependent H2A ubiquitination, promoting the formation of 'Lys-63'-linked ubiquitin conjugates. This leads to concentrate ubiquitinated histones H2A and H2AX at DNA lesions to the threshold required for recruitment of TP53BP1 and BRCA1. Also recruited at DNA interstrand cross-links (ICLs) sites and promotes accumulation of 'Lys-63'-linked ubiquitination of histones H2A and H2AX, leading to recruitment of FAAP20/C1orf86 and Fanconi anemia (FA) complex, followed by interstrand cross-link repair. H2A ubiquitination also mediates the ATM-dependent transcriptional silencing at regions flanking DSBs in cis, a mechanism to avoid collision between transcription and repair intermediates. Also involved in class switch recombination in immune system, via its role in regulation of DSBs repair. Following DNA damage, promotes the ubiquitination and degradation of JMJD2A/KDM4A in collaboration with RNF8, leading to unmask H4K20me2 mark and promote the recruitment of TP53BP1 at DNA damage sites. Not able to initiate 'Lys-63'-linked ubiquitination in vitro; possibly due to partial occlusion of the UBE2N/UBC13-binding region. Catalyzes monoubiquitination of 'Lys-13' and 'Lys-15' of nucleosomal histone H2A (H2AK13Ub and H2AK15Ub, respectively). This Homo sapiens (Human) protein is E3 ubiquitin-protein ligase RNF168.